The following is a 328-amino-acid chain: DNA repair protein RAD51 homolog 4 (328 aa).

The interval Met-1 to Ser-83 is preferentially binds ssDNA. Gly-107 to Thr-114 is a binding site for ATP.

It belongs to the RecA family. RAD51 subfamily. Part of the BCDX2 complex consisting of RAD51B, RAD51C, RAD51D and XRCC2; the complex has a ring-like structure arranged into a flat disc around a central channel. In the absence of DNA, the BCDX2 subcomplex XRCC2:RAD51D formed a multimeric ring structure; in the presence of single-stranded DNA it formed a filamentous structure with the ssDNA. Interacts with SWSAP1 and ZSWIM7; involved in homologous recombination repair. Interacts with BLM; required for stimulation of BLM activity by the BCDX2 subcomplex XRCC2:RAD51D. In terms of tissue distribution, expressed in colon, prostate, spleen, testis, ovary, thymus and small intestine. Weakly expressed in leukocytes.

It localises to the nucleus. Its subcellular location is the cytoplasm. The protein resides in the cytoskeleton. The protein localises to the microtubule organizing center. It is found in the centrosome. It localises to the chromosome. Its subcellular location is the telomere. Functionally, involved in the homologous recombination repair (HRR) pathway of double-stranded DNA breaks arising during DNA replication or induced by DNA-damaging agents. Bind to single-stranded DNA (ssDNA) and has DNA-dependent ATPase activity. Part of the RAD51 paralog protein complex BCDX2 which acts in the BRCA1-BRCA2-dependent HR pathway. Upon DNA damage, BCDX2 acts downstream of BRCA2 recruitment and upstream of RAD51 recruitment. BCDX2 binds predominantly to the intersection of the four duplex arms of the Holliday junction and to junction of replication forks. The BCDX2 complex was originally reported to bind single-stranded DNA, single-stranded gaps in duplex DNA and specifically to nicks in duplex DNA. Involved in telomere maintenance. The BCDX2 subcomplex XRCC2:RAD51D can stimulate Holliday junction resolution by BLM. The sequence is that of DNA repair protein RAD51 homolog 4 (RAD51D) from Homo sapiens (Human).